A 1912-amino-acid polypeptide reads, in one-letter code: Vitellogenin-1 (1912 aa).

An N-terminal signal peptide occupies residues 1–15; the sequence is MRGLISALVLTLVGS. The 640-residue stretch at 24-663 folds into the Vitellogenin domain; it reads FGENKVYTYN…AGSLIPTMAV (640 aa). N-linked (GlcNAc...) asparagine glycosylation occurs at Asn-163. Residues 948–972 are disordered; sequence DSASGETDNIRDRQSVEDVSSGNSF. N-linked (GlcNAc...) asparagine glycosylation is present at Asn-991. Disordered stretches follow at residues 1080–1329 and 1351–1432; these read KILD…SYDI and HWHS…RERN. Composition is skewed to low complexity over residues 1092-1124 and 1150-1235; these read NSRS…NRAS and SSSS…SSSK. Asn-1206 carries an N-linked (GlcNAc...) asparagine glycan. The span at 1259–1269 shows a compositional bias: basic and acidic residues; the sequence is EGERSVHEQKQ. Low complexity predominate over residues 1273–1299; it reads SSSSSSSRASSNSRSTSSSTSSSSESS. Over residues 1306-1316 the composition is skewed to basic and acidic residues; sequence WKQDREAETKR. The span at 1319–1328 shows a compositional bias: polar residues; it reads SQFNSHSSYD. A compositionally biased stretch (low complexity) spans 1357–1381; the sequence is RTSSSSSSSSSESGSSHSNSSSSDS. Asn-1375 is a glycosylation site (N-linked (GlcNAc...) asparagine). Over residues 1397 to 1409 the composition is skewed to basic residues; sequence SHRHGEKAAHSSR. A VWFD domain is found at 1640 to 1818; it reads STCEVSKGDF…SWVLLEETCS (179 aa). Disulfide bonds link Cys-1642–Cys-1781 and Cys-1665–Cys-1817. Asn-1662, Asn-1698, and Asn-1703 each carry an N-linked (GlcNAc...) asparagine glycan.

In terms of processing, phosvitin, an egg yolk storage protein, is one of the most highly phosphorylated (10%) proteins in nature. Post-translationally, cathepsin D is responsible for intraoocytic processing of vitellogenin. May contain intrachain disulfide bonds. In terms of tissue distribution, produced by the liver, secreted into the blood and then sequestered by receptor mediated endocytosis into growing oocytes, where it is generally cleaved, giving rise to the respective yolk components.

Its function is as follows. Precursor of the egg-yolk proteins that are sources of nutrients during early development of oviparous organisms. Phosvitin is believed to be of importance in sequestering calcium, iron and other cations for the developing embryo. This is Vitellogenin-1 (VTG1) from Gallus gallus (Chicken).